The following is a 447-amino-acid chain: Serine/threonine-protein phosphatase 2A 55 kDa regulatory subunit B alpha isoform (447 aa).

Alanine 2 is modified (N-acetylalanine). WD repeat units follow at residues 11 to 80 (QWCF…FQSH), 94 to 174 (EKIN…IFAN), 175 to 218 (AHTY…VDIK), 227 to 270 (EVIT…KLFE), 288 to 325 (ISDVKFSHSGRYMMTRDYLSVKIWDLNMENRPVETYQV), 347 to 381 (ECCWNGSDSVVMTGSYNNFFRMFDRNTKRDITLEA), and 414 to 446 (DFNKKILHTAWHPKENIIAVATTNNLYIFQDKV).

It belongs to the phosphatase 2A regulatory subunit B family. In terms of assembly, PP2A consists of a common heterodimeric core enzyme, composed of a 36 kDa catalytic subunit (subunit C) and a 65 kDa constant regulatory subunit (PR65 or subunit A), that associates with a variety of regulatory subunits. Proteins that associate with the core dimer include three families of regulatory subunits B (the R2/B/PR55/B55, R3/B''/PR72/PR130/PR59 and R5/B'/B56 families), the 48 kDa variable regulatory subunit, viral proteins, and cell signaling molecules. Interacts with the PP2A C catalytic subunit PPP2CA. Interacts with the PP2A A subunit PPP2R1A. Interacts with TP53. Interacts with IER5. Interacts with MFHAS1; the interaction is direct. Interacts with PABIR1/FAM122A (via its N-terminus); the interaction is direct and inhibits PP2A activity. Interacts with ARPP19; the interaction is direct and inhibits PP2A activity. Interacts with CRTC3. In terms of tissue distribution, expressed in all tissues examined.

Its function is as follows. Substrate-recognition subunit of protein phosphatase 2A (PP2A) that plays a key role in cell cycle by controlling mitosis entry and exit. Involved in chromosome clustering during late mitosis by mediating dephosphorylation of MKI67. Essential for serine/threonine-protein phosphatase 2A-mediated dephosphorylation of WEE1, preventing its ubiquitin-mediated proteolysis, increasing WEE1 protein levels, and promoting the G2/M checkpoint. This is Serine/threonine-protein phosphatase 2A 55 kDa regulatory subunit B alpha isoform (PPP2R2A) from Homo sapiens (Human).